The chain runs to 96 residues: uncharacterized protein (96 aa).

It localises to the mitochondrion. This is an uncharacterized protein from Schizosaccharomyces pombe (strain 972 / ATCC 24843) (Fission yeast).